The following is a 264-amino-acid chain: MLYIIGLGLYDENDISIKGLRAIEDCDEVYAEFYTAMLQGSSLSAIERRIGRSVKVLGRGEIEEERIPIERALELDVALLVAGDPLVATTHTELLIDAHRRGIETRVIHSSSIISAAPGLAGLQAYKFGRIITIPFTSDNYFPTSPYTNIGENLKAGSHSLVLLDIEAHRNRYMTATEGLRYLLKASEKLDDGTISGETLAVVIARAGSEKPLVRADKIATLVEEDFGDPLHCLVVPAGLHFIEADYLVEIAGAPRAVVERMIL.

Residues leucine 9, aspartate 84, valine 87, 112 to 113, leucine 164, alanine 207, and histidine 232 each bind S-adenosyl-L-methionine; that span reads SI.

The protein belongs to the diphthine synthase family. In terms of assembly, homodimer.

The catalysed reaction is 2-[(3S)-amino-3-carboxypropyl]-L-histidyl-[translation elongation factor 2] + 3 S-adenosyl-L-methionine = diphthine-[translation elongation factor 2] + 3 S-adenosyl-L-homocysteine + 3 H(+). The protein operates within protein modification; peptidyl-diphthamide biosynthesis. In terms of biological role, S-adenosyl-L-methionine-dependent methyltransferase that catalyzes the trimethylation of the amino group of the modified target histidine residue in translation elongation factor 2 (EF-2), to form an intermediate called diphthine. The three successive methylation reactions represent the second step of diphthamide biosynthesis. The polypeptide is Diphthine synthase (Methanothermobacter thermautotrophicus (strain ATCC 29096 / DSM 1053 / JCM 10044 / NBRC 100330 / Delta H) (Methanobacterium thermoautotrophicum)).